A 561-amino-acid chain; its full sequence is Long-chain-fatty-acid--CoA ligase (561 aa).

An ATP-binding site is contributed by 213 to 224 (YTGGTTGVAKGA).

Belongs to the ATP-dependent AMP-binding enzyme family. It depends on Mg(2+) as a cofactor.

It localises to the membrane. The enzyme catalyses a long-chain fatty acid + ATP + CoA = a long-chain fatty acyl-CoA + AMP + diphosphate. It functions in the pathway lipid metabolism; fatty acid beta-oxidation. Catalyzes the esterification, concomitant with transport, of exogenous long-chain fatty acids into metabolically active CoA thioesters for subsequent degradation or incorporation into phospholipids. The polypeptide is Long-chain-fatty-acid--CoA ligase (fadD) (Salmonella typhi).